The primary structure comprises 469 residues: UDP-N-acetylmuramate--L-alanine ligase (469 aa).

112-118 (GTHGKTT) serves as a coordination point for ATP.

This sequence belongs to the MurCDEF family.

It localises to the cytoplasm. It catalyses the reaction UDP-N-acetyl-alpha-D-muramate + L-alanine + ATP = UDP-N-acetyl-alpha-D-muramoyl-L-alanine + ADP + phosphate + H(+). The protein operates within cell wall biogenesis; peptidoglycan biosynthesis. In terms of biological role, cell wall formation. This chain is UDP-N-acetylmuramate--L-alanine ligase, found in Methylibium petroleiphilum (strain ATCC BAA-1232 / LMG 22953 / PM1).